The primary structure comprises 171 residues: Adenine phosphoribosyltransferase (171 aa).

It belongs to the purine/pyrimidine phosphoribosyltransferase family. In terms of assembly, homodimer.

Its subcellular location is the cytoplasm. The enzyme catalyses AMP + diphosphate = 5-phospho-alpha-D-ribose 1-diphosphate + adenine. The protein operates within purine metabolism; AMP biosynthesis via salvage pathway; AMP from adenine: step 1/1. Functionally, catalyzes a salvage reaction resulting in the formation of AMP, that is energically less costly than de novo synthesis. This Solidesulfovibrio magneticus (strain ATCC 700980 / DSM 13731 / RS-1) (Desulfovibrio magneticus) protein is Adenine phosphoribosyltransferase.